The following is a 142-amino-acid chain: Putative pre-16S rRNA nuclease (142 aa).

Belongs to the YqgF nuclease family.

It localises to the cytoplasm. Could be a nuclease involved in processing of the 5'-end of pre-16S rRNA. The polypeptide is Putative pre-16S rRNA nuclease (Nitratidesulfovibrio vulgaris (strain DP4) (Desulfovibrio vulgaris)).